We begin with the raw amino-acid sequence, 353 residues long: Chorismate synthase (353 aa).

Residues Arg-48 and Arg-54 each contribute to the NADP(+) site. FMN is bound by residues 125 to 127 (RSS), 238 to 239 (NA), Gly-278, 293 to 297 (KPTSS), and Arg-319.

The protein belongs to the chorismate synthase family. Homotetramer. The cofactor is FMNH2.

It catalyses the reaction 5-O-(1-carboxyvinyl)-3-phosphoshikimate = chorismate + phosphate. The protein operates within metabolic intermediate biosynthesis; chorismate biosynthesis; chorismate from D-erythrose 4-phosphate and phosphoenolpyruvate: step 7/7. Catalyzes the anti-1,4-elimination of the C-3 phosphate and the C-6 proR hydrogen from 5-enolpyruvylshikimate-3-phosphate (EPSP) to yield chorismate, which is the branch point compound that serves as the starting substrate for the three terminal pathways of aromatic amino acid biosynthesis. This reaction introduces a second double bond into the aromatic ring system. The polypeptide is Chorismate synthase (Bordetella bronchiseptica (strain ATCC BAA-588 / NCTC 13252 / RB50) (Alcaligenes bronchisepticus)).